Reading from the N-terminus, the 193-residue chain is Flagellar transcriptional regulator FlhC (193 aa).

Residues Cys-138, Cys-141, Cys-158, and Cys-161 each coordinate Zn(2+).

Belongs to the FlhC family. Heterohexamer composed of two FlhC and four FlhD subunits. Each FlhC binds a FlhD dimer, forming a heterotrimer, and a hexamer assembles by dimerization of two heterotrimers. Zn(2+) serves as cofactor.

It localises to the cytoplasm. Functionally, functions in complex with FlhD as a master transcriptional regulator that regulates transcription of several flagellar and non-flagellar operons by binding to their promoter region. Activates expression of class 2 flagellar genes, including fliA, which is a flagellum-specific sigma factor that turns on the class 3 genes. Also regulates genes whose products function in a variety of physiological pathways. This is Flagellar transcriptional regulator FlhC from Proteus mirabilis.